The primary structure comprises 213 residues: Orotate phosphoribosyltransferase (213 aa).

A 5-phospho-alpha-D-ribose 1-diphosphate-binding site is contributed by Lys26. Residue Phe34–Phe35 participates in orotate binding. 5-phospho-alpha-D-ribose 1-diphosphate contacts are provided by residues Tyr72–Lys73, Arg99, Lys100, Lys103, His105, and Asp124–Ala132. The orotate site is built by Thr128 and Arg156.

It belongs to the purine/pyrimidine phosphoribosyltransferase family. PyrE subfamily. As to quaternary structure, homodimer. Requires Mg(2+) as cofactor.

The enzyme catalyses orotidine 5'-phosphate + diphosphate = orotate + 5-phospho-alpha-D-ribose 1-diphosphate. Its pathway is pyrimidine metabolism; UMP biosynthesis via de novo pathway; UMP from orotate: step 1/2. Its function is as follows. Catalyzes the transfer of a ribosyl phosphate group from 5-phosphoribose 1-diphosphate to orotate, leading to the formation of orotidine monophosphate (OMP). The polypeptide is Orotate phosphoribosyltransferase (Salmonella agona (strain SL483)).